The chain runs to 99 residues: Large ribosomal subunit protein uL23 (99 aa).

It belongs to the universal ribosomal protein uL23 family. As to quaternary structure, part of the 50S ribosomal subunit. Contacts protein L29, and trigger factor when it is bound to the ribosome.

One of the early assembly proteins it binds 23S rRNA. One of the proteins that surrounds the polypeptide exit tunnel on the outside of the ribosome. Forms the main docking site for trigger factor binding to the ribosome. This Stutzerimonas stutzeri (strain A1501) (Pseudomonas stutzeri) protein is Large ribosomal subunit protein uL23.